Consider the following 153-residue polypeptide: Endoribonuclease YbeY (153 aa).

His114, His118, and His124 together coordinate Zn(2+).

The protein belongs to the endoribonuclease YbeY family. Zn(2+) serves as cofactor.

The protein localises to the cytoplasm. Its function is as follows. Single strand-specific metallo-endoribonuclease involved in late-stage 70S ribosome quality control and in maturation of the 3' terminus of the 16S rRNA. This chain is Endoribonuclease YbeY, found in Nitrosococcus oceani (strain ATCC 19707 / BCRC 17464 / JCM 30415 / NCIMB 11848 / C-107).